A 151-amino-acid polypeptide reads, in one-letter code: 3-hydroxyacyl-[acyl-carrier-protein] dehydratase FabZ (151 aa).

Histidine 54 is an active-site residue.

It belongs to the thioester dehydratase family. FabZ subfamily.

The protein localises to the cytoplasm. It catalyses the reaction a (3R)-hydroxyacyl-[ACP] = a (2E)-enoyl-[ACP] + H2O. Its function is as follows. Involved in unsaturated fatty acids biosynthesis. Catalyzes the dehydration of short chain beta-hydroxyacyl-ACPs and long chain saturated and unsaturated beta-hydroxyacyl-ACPs. This Sodalis glossinidius (strain morsitans) protein is 3-hydroxyacyl-[acyl-carrier-protein] dehydratase FabZ.